A 207-amino-acid polypeptide reads, in one-letter code: NADH-quinone oxidoreductase subunit C (207 aa).

It belongs to the complex I 30 kDa subunit family. NDH-1 is composed of 14 different subunits. Subunits NuoB, C, D, E, F, and G constitute the peripheral sector of the complex.

It is found in the cell inner membrane. It carries out the reaction a quinone + NADH + 5 H(+)(in) = a quinol + NAD(+) + 4 H(+)(out). NDH-1 shuttles electrons from NADH, via FMN and iron-sulfur (Fe-S) centers, to quinones in the respiratory chain. The immediate electron acceptor for the enzyme in this species is believed to be ubiquinone. Couples the redox reaction to proton translocation (for every two electrons transferred, four hydrogen ions are translocated across the cytoplasmic membrane), and thus conserves the redox energy in a proton gradient. This is NADH-quinone oxidoreductase subunit C from Rickettsia felis (strain ATCC VR-1525 / URRWXCal2) (Rickettsia azadi).